The sequence spans 440 residues: Tryptophan synthase beta chain 2 (440 aa).

At K110 the chain carries N6-(pyridoxal phosphate)lysine.

The protein belongs to the TrpB family. In terms of assembly, tetramer of two alpha and two beta chains. It depends on pyridoxal 5'-phosphate as a cofactor.

The catalysed reaction is (1S,2R)-1-C-(indol-3-yl)glycerol 3-phosphate + L-serine = D-glyceraldehyde 3-phosphate + L-tryptophan + H2O. The protein operates within amino-acid biosynthesis; L-tryptophan biosynthesis; L-tryptophan from chorismate: step 5/5. In terms of biological role, the beta subunit is responsible for the synthesis of L-tryptophan from indole and L-serine. In Pyrococcus abyssi (strain GE5 / Orsay), this protein is Tryptophan synthase beta chain 2 (trpB2).